Reading from the N-terminus, the 283-residue chain is Coiled-coil domain-containing protein 42 homolog (283 aa).

Coiled-coil stretches lie at residues 31 to 139 (ATQL…LQRY) and 174 to 204 (QDLR…HRVS).

This sequence belongs to the CFAP73 family.

The sequence is that of Coiled-coil domain-containing protein 42 homolog from Monosiga brevicollis (Choanoflagellate).